The primary structure comprises 350 residues: GTPase Obg (350 aa).

Residues methionine 1–isoleucine 158 enclose the Obg domain. Residues alanine 159–lysine 339 enclose the OBG-type G domain. GTP-binding positions include glycine 165 to serine 172, phenylalanine 190 to threonine 194, aspartate 212 to glycine 215, serine 280 to aspartate 283, and serine 320 to leucine 322. Residues serine 172 and threonine 192 each coordinate Mg(2+).

Belongs to the TRAFAC class OBG-HflX-like GTPase superfamily. OBG GTPase family. As to quaternary structure, monomer. Mg(2+) serves as cofactor.

It is found in the cytoplasm. In terms of biological role, an essential GTPase which binds GTP, GDP and possibly (p)ppGpp with moderate affinity, with high nucleotide exchange rates and a fairly low GTP hydrolysis rate. Plays a role in control of the cell cycle, stress response, ribosome biogenesis and in those bacteria that undergo differentiation, in morphogenesis control. This is GTPase Obg from Campylobacter jejuni (strain RM1221).